The chain runs to 204 residues: tRNA (pseudouridine(54)-N(1))-methyltransferase (204 aa).

2 residues coordinate S-adenosyl-L-methionine: L136 and G158.

Belongs to the methyltransferase superfamily. TrmY family. As to quaternary structure, homodimer.

The protein localises to the cytoplasm. The catalysed reaction is pseudouridine(54) in tRNA + S-adenosyl-L-methionine = N(1)-methylpseudouridine(54) in tRNA + S-adenosyl-L-homocysteine + H(+). Its function is as follows. Specifically catalyzes the N1-methylation of pseudouridine at position 54 (Psi54) in tRNAs. The protein is tRNA (pseudouridine(54)-N(1))-methyltransferase of Pyrococcus abyssi (strain GE5 / Orsay).